The sequence spans 545 residues: T-complex protein 1 subunit alpha (545 aa).

It belongs to the TCP-1 chaperonin family. In terms of assembly, heterooligomeric complex of about 850 to 900 kDa that forms two stacked rings, 12 to 16 nm in diameter.

The protein localises to the cytoplasm. Molecular chaperone; assists the folding of proteins upon ATP hydrolysis. Known to play a role, in vitro, in the folding of actin and tubulin. In Schistosoma mansoni (Blood fluke), this protein is T-complex protein 1 subunit alpha (TCP-1A).